The following is a 347-amino-acid chain: Phenylalanine--tRNA ligase alpha subunit (347 aa).

Glutamate 261 contacts Mg(2+).

This sequence belongs to the class-II aminoacyl-tRNA synthetase family. Phe-tRNA synthetase alpha subunit type 1 subfamily. In terms of assembly, tetramer of two alpha and two beta subunits. Mg(2+) is required as a cofactor.

It localises to the cytoplasm. The catalysed reaction is tRNA(Phe) + L-phenylalanine + ATP = L-phenylalanyl-tRNA(Phe) + AMP + diphosphate + H(+). This chain is Phenylalanine--tRNA ligase alpha subunit, found in Streptococcus pyogenes serotype M3 (strain ATCC BAA-595 / MGAS315).